Reading from the N-terminus, the 245-residue chain is Probable phosphatase Spro_1934 (245 aa).

Residues H7, H9, H15, H40, E73, H101, H131, D192, and H194 each contribute to the Zn(2+) site.

Belongs to the PHP family. In terms of assembly, homotrimer. Requires Zn(2+) as cofactor.

This chain is Probable phosphatase Spro_1934, found in Serratia proteamaculans (strain 568).